A 180-amino-acid chain; its full sequence is Large ribosomal subunit protein uL6 (180 aa).

Belongs to the universal ribosomal protein uL6 family. In terms of assembly, part of the 50S ribosomal subunit.

In terms of biological role, this protein binds to the 23S rRNA, and is important in its secondary structure. It is located near the subunit interface in the base of the L7/L12 stalk, and near the tRNA binding site of the peptidyltransferase center. This chain is Large ribosomal subunit protein uL6, found in Thermus thermophilus (strain ATCC BAA-163 / DSM 7039 / HB27).